Consider the following 244-residue polypeptide: Myosin-7 (244 aa).

A rodlike tail (S2 and LMM domains) region spans residues 1 to 244 (VEQTERSRKL…DIGTKGLNEE (244 aa)). The stretch at 1-244 (VEQTERSRKL…DIGTKGLNEE (244 aa)) forms a coiled coil. The disordered stretch occupies residues 216 to 244 (EERADIAESQVNKLRAKSRDIGTKGLNEE). The segment covering 232-244 (KSRDIGTKGLNEE) has biased composition (basic and acidic residues).

In terms of assembly, muscle myosin is a hexameric protein that consists of 2 heavy chain subunits (MHC), 2 alkali light chain subunits (MLC) and 2 regulatory light chain subunits (MLC-2). Interacts with ECPAS. Interacts (via C-terminus) with LRRC39.

It localises to the cytoplasm. The protein resides in the myofibril. It is found in the sarcomere. Its function is as follows. Myosins are actin-based motor molecules with ATPase activity essential for muscle contraction. Forms regular bipolar thick filaments that, together with actin thin filaments, constitute the fundamental contractile unit of skeletal and cardiac muscle. The protein is Myosin-7 (MYH7) of Papio hamadryas (Hamadryas baboon).